A 130-amino-acid polypeptide reads, in one-letter code: Gonadotropin subunit beta-1 (130 aa).

The signal sequence occupies residues 1-18 (MRMHFVVMVMLLPALMMA). 5 disulfides stabilise this stretch: C26–C74, C40–C89, C51–C105, C55–C107, and C110–C117. Residue N30 is glycosylated (N-linked (GlcNAc...) asparagine).

This sequence belongs to the glycoprotein hormones subunit beta family. In terms of assembly, heterodimer of an alpha and a beta chain.

The protein localises to the secreted. Involved in gametogenesis and steroidogenesis. This is Gonadotropin subunit beta-1 (cgba) from Cyprinus carpio (Common carp).